A 619-amino-acid chain; its full sequence is MKKDVRILLVGEPRVGKTSLIMSLVSEEFPEEVPPRAEEITIPADVTPERVPTHIVDYSEAEQNDEQLYHEISQANVICIVYAVNNKNSIDKVTSRWIPLINERTDKDSRLPLILVGNKSDLVEYSSMETILPIMNQYTEIETCVECSAKNLKNRSELFYYAQKAVLHPTGPLYCPEEKEMKPACIKALTRIFRISDQDNDGTLNDAELNFFQRICFNTPLAPQALEDVKNVVRKNVSDGVADNGLTLKGFLFLHTLFIQRGRHETTWTVLRRFGYDDDLELTPEYLFPLLKIPPDCTTELNHHAYLFLQSIFDKHDLDRDCALSPDELKDLFKVFPYMPWGPDVNNTVCTNGKGGWITYQGFLSQWTLTTYLDVQRCLEYLGYLGYSILAEQESQASAITVTRDKKIDLQKKQTQRNVFRCNVVGMKGCGKSGVLQALLGRNLMRQRQIRAEHKSYYAINTVYVYGQEKYLLLHDVSDSEFLTDAETICDVVCLVYDVSNPKSFEYCVRIFKQHFMDSRIPCLVVAAKSDLHEVRQEYSISPAEFCKKHKMPPPQAFTCNTVDMPSKDIFVKLTTMAMYPHVTQADLKSSTFWLRASFGATVFAFLGFAMYKALIKQR.

Residues methionine 1–phenylalanine 593 are Cytoplasmic-facing. Residues lysine 2–histidine 168 form the Miro 1 domain. The GTP site is built by arginine 14, glycine 16, lysine 17, threonine 18, and serine 19. Position 18 (threonine 18) interacts with Mg(2+). Mg(2+) is bound by residues proline 35 and aspartate 57. Residues serine 59, asparagine 118, lysine 119, aspartate 121, alanine 149, and lysine 150 each coordinate GTP. EF-hand domains are found at residues alanine 184–threonine 219 and histidine 304–methionine 339. Ca(2+)-binding residues include aspartate 197, aspartate 199, aspartate 201, threonine 203, glutamate 208, aspartate 317, aspartate 319, aspartate 321, alanine 323, and glutamate 328. A Miro 2 domain is found at arginine 417–tyrosine 580. The GTP site is built by glycine 429, cysteine 430, glycine 431, lysine 432, serine 433, glycine 434, arginine 448, lysine 529, aspartate 531, threonine 559, and cysteine 560. Position 429 (glycine 429) interacts with Mg(2+). Residues tryptophan 594–isoleucine 616 form a helical; Anchor for type IV membrane protein membrane-spanning segment. Residues lysine 617–arginine 619 are Mitochondrial intermembrane-facing.

Belongs to the mitochondrial Rho GTPase family. In terms of assembly, homodimer.

The protein localises to the mitochondrion outer membrane. The catalysed reaction is GTP + H2O = GDP + phosphate + H(+). The enzyme catalyses ATP + H2O = ADP + phosphate + H(+). It catalyses the reaction UTP + H2O = UDP + phosphate + H(+). Atypical mitochondrial nucleoside-triphosphatase (NTPase) involved in mitochondrial trafficking. Probably involved in control of anterograde transport of mitochondria and their subcellular distribution. Can hydrolyze GTP, ATP and UTP. The protein is Mitochondrial Rho GTPase 1 (RHOT1) of Gallus gallus (Chicken).